Here is a 250-residue protein sequence, read N- to C-terminus: CCN family member 5 (250 aa).

Positions 1-23 (MRGSPLIRLLATSFLCLLSMVCA) are cleaved as a signal peptide. Intrachain disulfides connect cysteine 22/cysteine 50, cysteine 26/cysteine 52, cysteine 32/cysteine 53, cysteine 39/cysteine 56, cysteine 64/cysteine 78, and cysteine 70/cysteine 100. The 80-residue stretch at 24-103 (QLCRTPCTCP…DEDDGDCEVN (80 aa)) folds into the IGFBP N-terminal domain. A VWFC domain is found at 98-164 (GDCEVNGRRY…GKCCPEWVCD (67 aa)). One can recognise a TSP type-1 domain in the interval 194–238 (WPNWSTAWGPCSTTCGLGIATRVSNQNRFCQLEIQRRLCLPRPCL). The N-linked (GlcNAc...) asparagine glycan is linked to asparagine 196.

Belongs to the CCN family.

It localises to the secreted. Its function is as follows. May play an important role in modulating bone turnover. Promotes the adhesion of osteoblast cells and inhibits the binding of fibrinogen to integrin receptors. In addition, inhibits osteocalcin production. The sequence is that of CCN family member 5 (Ccn5) from Rattus norvegicus (Rat).